A 135-amino-acid polypeptide reads, in one-letter code: UPF0216 protein MTH_949 (135 aa).

The protein belongs to the UPF0216 family.

This is UPF0216 protein MTH_949 from Methanothermobacter thermautotrophicus (strain ATCC 29096 / DSM 1053 / JCM 10044 / NBRC 100330 / Delta H) (Methanobacterium thermoautotrophicum).